A 117-amino-acid chain; its full sequence is Conotoxin vil14a (117 aa).

Residues Met1–Ser22 form the signal peptide. The propeptide occupies Glu23–Arg90. Residues Arg53–Val86 are disordered. Residues Arg62–Glu80 show a composition bias toward basic and acidic residues. 2 disulfides stabilise this stretch: Cys96-Cys116 and Cys100-Cys112.

This sequence belongs to the conotoxin R superfamily. As to expression, expressed by the venom duct.

It localises to the secreted. The chain is Conotoxin vil14a from Conus villepinii (Villepin's cone).